A 352-amino-acid polypeptide reads, in one-letter code: E3 ubiquitin-protein ligase RNF146 (352 aa).

The RING-type zinc finger occupies 36 to 74 (CAICLQTCVHPVSLPCKHVFCYLCVKGASWLGKRCALCR). Residues K84 and K94 each participate in a glycyl lysine isopeptide (Lys-Gly) (interchain with G-Cter in ubiquitin) cross-link. A WWE domain is found at 91-167 (EELKAASRGN…EHGRRRKIKR (77 aa)). A glycoprotein is bound by residues Y107, R110, and W114. A Glycyl lysine isopeptide (Lys-Gly) (interchain with G-Cter in ubiquitin) cross-link involves residue K130. Residues Y144, Q153, R163, and K175 each contribute to the a glycoprotein site. K175 participates in a covalent cross-link: Glycyl lysine isopeptide (Lys-Gly) (interchain with G-Cter in ubiquitin). 3 disordered regions span residues 195-242 (SSAD…AGAS), 259-293 (ERSH…ASSD), and 317-352 (NQTV…VTEV). The segment covering 197–210 (ADGADSGSAHTGAS) has biased composition (low complexity). The segment covering 215-233 (VPSSTRPLTSVDGQLTSPV) has biased composition (polar residues). Residues 282-293 (STEETESDASSD) show a composition bias toward acidic residues. S288 and S292 each carry phosphoserine.

As to quaternary structure, can form homooligomers. Interacts with PARsylated AXIN1, AXIN2, BLZF1, CASC3, H1-2, IPO7, LIG3, NCL, PARP1, XRCC1, XRCC5 and XRCC6. Interacts with DDB1, DHX15, IQGAP1, LRPPRC, PARP2, PRKDC, RUVBL2, TNKS1 and TNKS2. Binding often leads to interactor ubiquitination, in the presence of the appropriate E1 and E2 enzymes, and proteasomal degradation. Post-translationally, ubiquitinated; autoubiquitinated. Autoubiquitination is enhanced upon poly(ADP-ribose)-binding.

It is found in the cytoplasm. The protein localises to the cytosol. Its subcellular location is the nucleus. The enzyme catalyses S-ubiquitinyl-[E2 ubiquitin-conjugating enzyme]-L-cysteine + [acceptor protein]-L-lysine = [E2 ubiquitin-conjugating enzyme]-L-cysteine + N(6)-ubiquitinyl-[acceptor protein]-L-lysine.. It functions in the pathway protein modification; protein ubiquitination. Its function is as follows. E3 ubiquitin-protein ligase that specifically binds poly-ADP-ribosylated (PARsylated) proteins and mediates their ubiquitination and subsequent degradation. May regulate many important biological processes, such as cell survival and DNA damage response. Acts as an activator of the Wnt signaling pathway by mediating the ubiquitination of PARsylated AXIN1 and AXIN2, 2 key components of the beta-catenin destruction complex. Acts in cooperation with tankyrase proteins (TNKS and TNKS2), which mediate PARsylation of target proteins AXIN1, AXIN2, BLZF1, CASC3, TNKS and TNKS2. Recognizes and binds tankyrase-dependent PARsylated proteins via its WWE domain and mediates their ubiquitination, leading to their degradation. Different ubiquitin linkage types have been observed: TNKS2 undergoes ubiquitination at 'Lys-48' and 'Lys-63', while AXIN1 is only ubiquitinated at 'Lys-48'. May regulate TNKS and TNKS2 subcellular location, preventing aggregation at a centrosomal location. Neuroprotective protein. Protects the brain against N-methyl-D-aspartate (NMDA) receptor-mediated glutamate excitotoxicity and ischemia, by interfering with PAR-induced cell death, called parthanatos. Prevents nuclear translocation of AIFM1 in a PAR-binding dependent manner. Does not affect PARP1 activation. Protects against cell death induced by DNA damaging agents, such as N-methyl-N-nitro-N-nitrosoguanidine (MNNG) and rescues cells from G1 arrest. Promotes cell survival after gamma-irradiation. Facilitates DNA repair. This is E3 ubiquitin-protein ligase RNF146 (Rnf146) from Rattus norvegicus (Rat).